The chain runs to 303 residues: Coenzyme PQQ synthesis protein B (303 aa).

This sequence belongs to the PqqB family.

The protein operates within cofactor biosynthesis; pyrroloquinoline quinone biosynthesis. In terms of biological role, may be involved in the transport of PQQ or its precursor to the periplasm. This Pseudomonas fluorescens (strain Pf0-1) protein is Coenzyme PQQ synthesis protein B.